The following is a 366-amino-acid chain: tRNA/tmRNA (uracil-C(5))-methyltransferase (366 aa).

The S-adenosyl-L-methionine site is built by Gln190, Tyr218, Asn223, Glu239, and Asp299. The Nucleophile role is filled by Cys324. Glu358 serves as the catalytic Proton acceptor.

The protein belongs to the class I-like SAM-binding methyltransferase superfamily. RNA M5U methyltransferase family. TrmA subfamily.

The enzyme catalyses uridine(54) in tRNA + S-adenosyl-L-methionine = 5-methyluridine(54) in tRNA + S-adenosyl-L-homocysteine + H(+). It catalyses the reaction uridine(341) in tmRNA + S-adenosyl-L-methionine = 5-methyluridine(341) in tmRNA + S-adenosyl-L-homocysteine + H(+). Its function is as follows. Dual-specificity methyltransferase that catalyzes the formation of 5-methyluridine at position 54 (m5U54) in all tRNAs, and that of position 341 (m5U341) in tmRNA (transfer-mRNA). In Shigella dysenteriae serotype 1 (strain Sd197), this protein is tRNA/tmRNA (uracil-C(5))-methyltransferase.